A 432-amino-acid chain; its full sequence is D-amino acid dehydrogenase (432 aa).

3–17 (VLVLGSGVIGTTTAY) provides a ligand contact to FAD.

Belongs to the DadA oxidoreductase family. FAD is required as a cofactor.

The catalysed reaction is a D-alpha-amino acid + A + H2O = a 2-oxocarboxylate + AH2 + NH4(+). It participates in amino-acid degradation; D-alanine degradation; NH(3) and pyruvate from D-alanine: step 1/1. Functionally, oxidative deamination of D-amino acids. The polypeptide is D-amino acid dehydrogenase (Azotobacter vinelandii (strain DJ / ATCC BAA-1303)).